A 382-amino-acid polypeptide reads, in one-letter code: Lipid-A-disaccharide synthase (382 aa).

The protein belongs to the LpxB family.

The enzyme catalyses 2-N,3-O-bis[(3R)-3-hydroxytetradecanoyl]-alpha-D-glucosaminyl 1-phosphate + UDP-2-N,3-O-bis[(3R)-3-hydroxytetradecanoyl]-alpha-D-glucosamine = lipid A disaccharide (E. coli) + UDP + H(+). The catalysed reaction is a lipid X + a UDP-2-N,3-O-bis[(3R)-3-hydroxyacyl]-alpha-D-glucosamine = a lipid A disaccharide + UDP + H(+). The protein operates within glycolipid biosynthesis; lipid IV(A) biosynthesis; lipid IV(A) from (3R)-3-hydroxytetradecanoyl-[acyl-carrier-protein] and UDP-N-acetyl-alpha-D-glucosamine: step 5/6. Condensation of UDP-2,3-diacylglucosamine and 2,3-diacylglucosamine-1-phosphate to form lipid A disaccharide, a precursor of lipid A, a phosphorylated glycolipid that anchors the lipopolysaccharide to the outer membrane of the cell. This Shigella flexneri serotype 5b (strain 8401) protein is Lipid-A-disaccharide synthase.